The primary structure comprises 177 residues: Large ribosomal subunit protein uL5 (177 aa).

It belongs to the universal ribosomal protein uL5 family. Part of the 50S ribosomal subunit; part of the 5S rRNA/L5/L18/L25 subcomplex. Contacts the 5S rRNA and the P site tRNA. Forms a bridge to the 30S subunit in the 70S ribosome.

Its function is as follows. This is one of the proteins that bind and probably mediate the attachment of the 5S RNA into the large ribosomal subunit, where it forms part of the central protuberance. In the 70S ribosome it contacts protein S13 of the 30S subunit (bridge B1b), connecting the 2 subunits; this bridge is implicated in subunit movement. Contacts the P site tRNA; the 5S rRNA and some of its associated proteins might help stabilize positioning of ribosome-bound tRNAs. This Wolbachia pipientis wMel protein is Large ribosomal subunit protein uL5.